The primary structure comprises 284 residues: Gigasin-3a (284 aa).

Residues 202-284 (GLDNPLPNPR…FKAGRKNNRN (83 aa)) are disordered. Over residues 223–245 (SSPLPESTPKSSTKTSSASPIKS) the composition is skewed to low complexity. Over residues 246–257 (RQGKKLRGKKQN) the composition is skewed to basic residues. The segment covering 258–267 (KTGNTRFTYR) has biased composition (polar residues). Residues 268 to 284 (NNKRNIKFKAGRKNNRN) are compositionally biased toward basic residues.

Component of the organic matrix of calcified shell layers.

This chain is Gigasin-3a, found in Magallana gigas (Pacific oyster).